We begin with the raw amino-acid sequence, 161 residues long: ATP synthase subunit b 1 (161 aa).

The helical transmembrane segment at 5–25 threads the bilayer; the sequence is PETWVAIAFLLLMGVFAYVGV.

Belongs to the ATPase B chain family. F-type ATPases have 2 components, F(1) - the catalytic core - and F(0) - the membrane proton channel. F(1) has five subunits: alpha(3), beta(3), gamma(1), delta(1), epsilon(1). F(0) has three main subunits: a(1), b(2) and c(10-14). The alpha and beta chains form an alternating ring which encloses part of the gamma chain. F(1) is attached to F(0) by a central stalk formed by the gamma and epsilon chains, while a peripheral stalk is formed by the delta and b chains.

It is found in the cell inner membrane. Its function is as follows. F(1)F(0) ATP synthase produces ATP from ADP in the presence of a proton or sodium gradient. F-type ATPases consist of two structural domains, F(1) containing the extramembraneous catalytic core and F(0) containing the membrane proton channel, linked together by a central stalk and a peripheral stalk. During catalysis, ATP synthesis in the catalytic domain of F(1) is coupled via a rotary mechanism of the central stalk subunits to proton translocation. Component of the F(0) channel, it forms part of the peripheral stalk, linking F(1) to F(0). The protein is ATP synthase subunit b 1 of Nitrobacter winogradskyi (strain ATCC 25391 / DSM 10237 / CIP 104748 / NCIMB 11846 / Nb-255).